We begin with the raw amino-acid sequence, 786 residues long: Endonuclease MutS2 (786 aa).

333–340 is an ATP binding site; sequence GPNTGGKT. Residues 682-709 are disordered; the sequence is EKIKPSKQSAAQRPVVKVSGGGMSGPST. Residues 711–786 form the Smr domain; it reads LDLRGERYDQ…GSGATIVNFK (76 aa).

It belongs to the DNA mismatch repair MutS family. MutS2 subfamily. Homodimer. Binds to stalled ribosomes, contacting rRNA.

Its function is as follows. Endonuclease that is involved in the suppression of homologous recombination and thus may have a key role in the control of bacterial genetic diversity. Acts as a ribosome collision sensor, splitting the ribosome into its 2 subunits. Detects stalled/collided 70S ribosomes which it binds and splits by an ATP-hydrolysis driven conformational change. Acts upstream of the ribosome quality control system (RQC), a ribosome-associated complex that mediates the extraction of incompletely synthesized nascent chains from stalled ribosomes and their subsequent degradation. Probably generates substrates for RQC. This chain is Endonuclease MutS2, found in Lacticaseibacillus casei (strain BL23) (Lactobacillus casei).